Here is a 383-residue protein sequence, read N- to C-terminus: tRNA-specific 2-thiouridylase MnmA (383 aa).

ATP is bound by residues 30-37 and M56; that span reads GMSGGVDS. An interaction with target base in tRNA region spans residues 116 to 118; it reads NPD. The Nucleophile role is filled by C121. A disulfide bridge links C121 with C218. Residue G146 participates in ATP binding. The interval 168-170 is interaction with tRNA; that stretch reads KDQ. Residue C218 is the Cysteine persulfide intermediate of the active site. Residues 330–331 are interaction with tRNA; it reads RY.

This sequence belongs to the MnmA/TRMU family.

Its subcellular location is the cytoplasm. The enzyme catalyses S-sulfanyl-L-cysteinyl-[protein] + uridine(34) in tRNA + AH2 + ATP = 2-thiouridine(34) in tRNA + L-cysteinyl-[protein] + A + AMP + diphosphate + H(+). Catalyzes the 2-thiolation of uridine at the wobble position (U34) of tRNA, leading to the formation of s(2)U34. The sequence is that of tRNA-specific 2-thiouridylase MnmA from Haemophilus influenzae (strain ATCC 51907 / DSM 11121 / KW20 / Rd).